We begin with the raw amino-acid sequence, 75 residues long: Lividin-3 (75 aa).

The N-terminal stretch at 1 to 22 (MFTLKKSLLLLFFLGTISLSLC) is a signal peptide. Residues 23–40 (EEERDADEDEGEMTEEEV) constitute a propeptide that is removed on maturation. An intrachain disulfide couples Cys-69 to Cys-75.

Expressed by the skin glands.

The protein localises to the secreted. Functionally, antimicrobial peptide. This is Lividin-3 from Odorrana livida (Green mountain frog).